We begin with the raw amino-acid sequence, 359 residues long: Heat-inducible transcription repressor HrcA (359 aa).

This sequence belongs to the HrcA family.

Functionally, negative regulator of class I heat shock genes (grpE-dnaK-dnaJ and groELS operons). Prevents heat-shock induction of these operons. This is Heat-inducible transcription repressor HrcA from Sinorhizobium medicae (strain WSM419) (Ensifer medicae).